Here is a 178-residue protein sequence, read N- to C-terminus: Single-stranded DNA-binding protein 2 (178 aa).

The SSB domain maps to 6–111 (VNKVILVGNL…VVVSQSGTMQ (106 aa)). Residues 55–61 (WHRVVLY) mediate DNA binding. The interval 111 to 161 (QMLGGRNSAGSGQQQGGWGQPQQPAAPSHSGMPPQQHPANEPPMDFDDDIP) is disordered.

As to quaternary structure, homotetramer.

This is Single-stranded DNA-binding protein 2 (ssb2) from Salmonella typhi.